The following is a 223-amino-acid chain: Deoxyribose-phosphate aldolase (223 aa).

Aspartate 91 (proton donor/acceptor) is an active-site residue. Catalysis depends on lysine 154, which acts as the Schiff-base intermediate with acetaldehyde. The active-site Proton donor/acceptor is lysine 183.

The protein belongs to the DeoC/FbaB aldolase family. DeoC type 1 subfamily.

Its subcellular location is the cytoplasm. It carries out the reaction 2-deoxy-D-ribose 5-phosphate = D-glyceraldehyde 3-phosphate + acetaldehyde. Its pathway is carbohydrate degradation; 2-deoxy-D-ribose 1-phosphate degradation; D-glyceraldehyde 3-phosphate and acetaldehyde from 2-deoxy-alpha-D-ribose 1-phosphate: step 2/2. In terms of biological role, catalyzes a reversible aldol reaction between acetaldehyde and D-glyceraldehyde 3-phosphate to generate 2-deoxy-D-ribose 5-phosphate. The sequence is that of Deoxyribose-phosphate aldolase from Geobacillus kaustophilus (strain HTA426).